Consider the following 610-residue polypeptide: DNA mismatch repair protein MutL (610 aa).

Residues 351 to 406 form a disordered region; it reads GQRPQAPWSAETSPSRPYQPAPAFSERPQASFDGLSTPTARAEPQFSPDPVSPGLA.

It belongs to the DNA mismatch repair MutL/HexB family.

Its function is as follows. This protein is involved in the repair of mismatches in DNA. It is required for dam-dependent methyl-directed DNA mismatch repair. May act as a 'molecular matchmaker', a protein that promotes the formation of a stable complex between two or more DNA-binding proteins in an ATP-dependent manner without itself being part of a final effector complex. The chain is DNA mismatch repair protein MutL from Rhizobium etli (strain ATCC 51251 / DSM 11541 / JCM 21823 / NBRC 15573 / CFN 42).